Here is a 329-residue protein sequence, read N- to C-terminus: Oligopeptide transport ATP-binding protein AppF (329 aa).

The ABC transporter domain occupies 10 to 261; that stretch reads LELRDVKKYF…PLHPYTQALL (252 aa). 53–60 serves as a coordination point for ATP; it reads GESGCGKS.

The protein belongs to the ABC transporter superfamily.

It localises to the cell membrane. Its function is as follows. This protein is a component of an oligopeptide permease, a binding protein-dependent transport system. This APP system can completely substitute for the OPP system in both sporulation and genetic competence, though, unlike OPP, is incapable of transporting tripeptides. Probably responsible for energy coupling to the transport system. The sequence is that of Oligopeptide transport ATP-binding protein AppF (appF) from Bacillus subtilis (strain 168).